A 359-amino-acid polypeptide reads, in one-letter code: MSLQAIIYNEDKLLVLDQLLLPYERKYISVSNVEDAFAVIKKMQVRGAPAIAIVAALSVAVGLKHLSEDADAKEYVINSFEHLKQSRPTAVNLFETAKFMQGIALQEGKNCRNKIIQEAERMLVKDLEDNHNIGTAGRKFLLQHYKDKDKLTVLTHCNTGSLATSGYGTALGIIRSLHESGNLEHAYCTETRPYNQGSRLTAFELVHDKIPATLVTDSTVASIMHKIDAIVVGADRVTRNGDTANKIGTYNLAILAKHFGKPFIVAAPFSSIDTSLASGSQITIEQRPPIEMTTITGPIITDSNSRNLEDPKRVRISIAAPGIDVYSPAFDVTPANLITAIATEKGFYTQQTNNKYDFS.

Catalysis depends on D235, which acts as the Proton donor.

Belongs to the eIF-2B alpha/beta/delta subunits family. MtnA subfamily.

The protein localises to the cytoplasm. Its subcellular location is the nucleus. The catalysed reaction is 5-(methylsulfanyl)-alpha-D-ribose 1-phosphate = 5-(methylsulfanyl)-D-ribulose 1-phosphate. It participates in amino-acid biosynthesis; L-methionine biosynthesis via salvage pathway; L-methionine from S-methyl-5-thio-alpha-D-ribose 1-phosphate: step 1/6. In terms of biological role, catalyzes the interconversion of methylthioribose-1-phosphate (MTR-1-P) into methylthioribulose-1-phosphate (MTRu-1-P). This Schizosaccharomyces pombe (strain 972 / ATCC 24843) (Fission yeast) protein is Methylthioribose-1-phosphate isomerase (mri1).